The following is a 176-amino-acid chain: Ribosome maturation factor RimM (176 aa).

Positions Pro-100 to Leu-173 constitute a PRC barrel domain.

The protein belongs to the RimM family. Binds ribosomal protein uS19.

It localises to the cytoplasm. Functionally, an accessory protein needed during the final step in the assembly of 30S ribosomal subunit, possibly for assembly of the head region. Essential for efficient processing of 16S rRNA. May be needed both before and after RbfA during the maturation of 16S rRNA. It has affinity for free ribosomal 30S subunits but not for 70S ribosomes. This is Ribosome maturation factor RimM from Prochlorococcus marinus (strain SARG / CCMP1375 / SS120).